The primary structure comprises 320 residues: o-succinylbenzoate synthase (320 aa).

Lysine 133 functions as the Proton donor in the catalytic mechanism. Positions 161, 190, and 213 each coordinate Mg(2+). The active-site Proton acceptor is lysine 235.

The protein belongs to the mandelate racemase/muconate lactonizing enzyme family. MenC type 1 subfamily. Requires a divalent metal cation as cofactor.

The enzyme catalyses (1R,6R)-6-hydroxy-2-succinyl-cyclohexa-2,4-diene-1-carboxylate = 2-succinylbenzoate + H2O. Its pathway is quinol/quinone metabolism; 1,4-dihydroxy-2-naphthoate biosynthesis; 1,4-dihydroxy-2-naphthoate from chorismate: step 4/7. It functions in the pathway quinol/quinone metabolism; menaquinone biosynthesis. Its function is as follows. Converts 2-succinyl-6-hydroxy-2,4-cyclohexadiene-1-carboxylate (SHCHC) to 2-succinylbenzoate (OSB). This is o-succinylbenzoate synthase from Salmonella newport (strain SL254).